The primary structure comprises 1585 residues: Histone acetyltransferase lsy-12 (1585 aa).

Disordered regions lie at residues M1–E37 and G279–V491. The span at P23 to E37 shows a compositional bias: basic and acidic residues. The segment covering G279–S296 has biased composition (polar residues). Positions T302–R312 are enriched in basic and acidic residues. 2 stretches are compositionally biased toward polar residues: residues L355–V364 and S411–L426. The segment covering S431 to S440 has biased composition (low complexity). Basic residues predominate over residues Q453–K469. Residues Q477–V491 are compositionally biased toward acidic residues. The MYST-type HAT domain maps to E544–P830. A C2HC MYST-type zinc finger spans residues L577–L602. K644 is subject to N6-acetyllysine; by autocatalysis. S685–T689 is an acetyl-CoA binding site. The Proton donor/acceptor role is filled by E720. 2 residues coordinate acetyl-CoA: S724 and K815. Composition is skewed to basic and acidic residues over residues S844 to R855 and V947 to E956. Disordered stretches follow at residues S844–E903, E927–S1262, E1286–H1373, and H1431–Q1507. The span at N977–G999 shows a compositional bias: polar residues. Residues T1011–D1022 are compositionally biased toward acidic residues. Basic and acidic residues predominate over residues D1029–S1046. The span at R1047 to A1060 shows a compositional bias: basic residues. Basic and acidic residues-rich tracts occupy residues V1070–N1081 and D1135–R1151. Residues P1164–P1173 show a composition bias toward low complexity. Residues L1185 to Q1194 are compositionally biased toward polar residues. A compositionally biased stretch (basic and acidic residues) spans N1196–P1207. Polar residues-rich tracts occupy residues A1298–P1317 and H1324–P1333. Residues Q1482 to Q1493 show a composition bias toward low complexity.

Belongs to the MYST (SAS/MOZ) family.

It carries out the reaction L-lysyl-[protein] + acetyl-CoA = N(6)-acetyl-L-lysyl-[protein] + CoA + H(+). Its function is as follows. Probable histone acetyltransferase. Required to initiate and then maintain lateralized gene expression in the ASE sensory neurons. Involved in determining cell fate in the ASE neurons. The protein is Histone acetyltransferase lsy-12 of Caenorhabditis elegans.